Consider the following 193-residue polypeptide: Peptidyl-tRNA hydrolase (193 aa).

Residue tyrosine 16 participates in tRNA binding. Histidine 21 (proton acceptor) is an active-site residue. 3 residues coordinate tRNA: phenylalanine 67, asparagine 69, and asparagine 115.

This sequence belongs to the PTH family. Monomer.

The protein localises to the cytoplasm. The enzyme catalyses an N-acyl-L-alpha-aminoacyl-tRNA + H2O = an N-acyl-L-amino acid + a tRNA + H(+). Functionally, hydrolyzes ribosome-free peptidyl-tRNAs (with 1 or more amino acids incorporated), which drop off the ribosome during protein synthesis, or as a result of ribosome stalling. Catalyzes the release of premature peptidyl moieties from peptidyl-tRNA molecules trapped in stalled 50S ribosomal subunits, and thus maintains levels of free tRNAs and 50S ribosomes. This Psychrobacter cryohalolentis (strain ATCC BAA-1226 / DSM 17306 / VKM B-2378 / K5) protein is Peptidyl-tRNA hydrolase.